Reading from the N-terminus, the 472-residue chain is ATP synthase subunit beta (472 aa).

157–164 contributes to the ATP binding site; the sequence is GGAGVGKT.

It belongs to the ATPase alpha/beta chains family. As to quaternary structure, F-type ATPases have 2 components, CF(1) - the catalytic core - and CF(0) - the membrane proton channel. CF(1) has five subunits: alpha(3), beta(3), gamma(1), delta(1), epsilon(1). CF(0) has three main subunits: a(1), b(2) and c(9-12). The alpha and beta chains form an alternating ring which encloses part of the gamma chain. CF(1) is attached to CF(0) by a central stalk formed by the gamma and epsilon chains, while a peripheral stalk is formed by the delta and b chains.

The protein localises to the cell membrane. It carries out the reaction ATP + H2O + 4 H(+)(in) = ADP + phosphate + 5 H(+)(out). Functionally, produces ATP from ADP in the presence of a proton gradient across the membrane. The catalytic sites are hosted primarily by the beta subunits. This is ATP synthase subunit beta from Desulforamulus reducens (strain ATCC BAA-1160 / DSM 100696 / MI-1) (Desulfotomaculum reducens).